The chain runs to 646 residues: MLKTLSKVSKNLSNTSAFLVKSKPLYISFCTCKAYFEDNTSLSRRFFSAKKSLQFKSLIRKYSEDSTLAWRDYENYNDDDLLYQRELSEIYNKCLKALHPFYPVFEVNSNLYYQLLMFTNYSNPKDNGFSKLLFSQYSDEKKVLVNFVYNVLRLDPDLQRQKRILESIISAALNICVSTVNLSRTDLKSSLKIILQTIDLFKYDSSFSSIYFRKDGPYHKVEKLLKSANIRSSLNSKTFNDFRTLFLLLIRDYSLFHGNSSHCMLANSMLPPSIAFSKMEKAEIFLRLRAFFQLMEHIDNERITPSEQFLDKVFISLLSAKNSCSLKMWLIHSFNKGWPVKIEFFVSFFKNFSNIVEGSMEVYSAYLHIIRDHYNLSDLADVQAIFLSRFILLRKKEDCKKLLEHVLPIRQLFLLNCYSLLNVLANYVVVFKDRLIFQEINQNWEEHKGQIPENFIFSLLKMFGEMQENQGFLNACIYYINKKKNLNEVSRYKINLLLLQGVNSFEVKDFYRKRGIEIMPKNLPRFFCYCLKKNKLSYALKYIRLSGLQFDYIVDCFRNSSDWTRTLISILSKKMGTEFAIRFLKIISFPLLSNDKVLREIEFFAIHEVNFRSLKWVADQQLRILPGWSSRPQKATFPLCTVHLKK.

As to quaternary structure, component of a complex, at least composed of cbp7 and cbp8.

It localises to the mitochondrion. Its function is as follows. Translation factor for cob1/cytochrome b; plays a role in cob1 mRNA stabilization and required for correct folding of the protein. The polypeptide is Cytochrome b translation regulator cbp8 (Schizosaccharomyces pombe (strain 972 / ATCC 24843) (Fission yeast)).